The chain runs to 232 residues: DOA4-independent degradation protein 4 (232 aa).

Residues Pro14 to Arg97 are a coiled coil. The segment at Leu183–Thr232 is interaction with VPS4. Positions Ile203–Thr232 are disordered. An MIT-interacting motif motif is present at residues Asp219–Lys229.

Belongs to the SNF7 family. In terms of assembly, core component of the ESCRT-III complex (endosomal sorting required for transport complex III). ESCRT-III appears to be sequentially assembled as a flat lattice on the endosome membrane and forms a transient 450 kDa complex that contains DID4, oligomerized SNF7, VPS20 and VPS24. SNF7 oligomerization into a membrane-associated filament is nucleated by association of SNF7 with VPS20; the process is terminated through association of VPS24, possibly by capping the SNF7 filament. VPS24 subsequently associates with DID4/VPS2.

The protein localises to the cytoplasm. It localises to the endosome membrane. In terms of biological role, required for the sorting and concentration of proteins resulting in the entry of these proteins into the invaginating vesicles of the multivesicular body (MVB). Acts a component of the ESCRT-III complex, which appears to be critical for late steps in MVB sorting, such as membrane invagination and final cargo sorting and recruitment of late-acting components of the sorting machinery. The MVB pathway requires the sequential function of ESCRT-O, -I,-II and -III complex assemblies. Can directly stimulate VPS4 ATPase activity. The DID4/VPS2-VPS24 subcomplex is required for the VPS4-dependent dissociation of ESCRT-III. In Saccharomyces cerevisiae (strain ATCC 204508 / S288c) (Baker's yeast), this protein is DOA4-independent degradation protein 4 (DID4).